Reading from the N-terminus, the 298-residue chain is Serine/threonine-protein kinase 1 (298 aa).

Positions 38-276 (FIATRPMFEG…FKSLVSHPWF (239 aa)) constitute a Protein kinase domain. ATP-binding positions include 45–53 (FEGGRNNVF) and Lys-65. The active-site Proton acceptor is the Asp-152.

The protein belongs to the protein kinase superfamily. Ser/Thr protein kinase family.

It is found in the virion. Its subcellular location is the host cytoplasm. It catalyses the reaction L-seryl-[protein] + ATP = O-phospho-L-seryl-[protein] + ADP + H(+). The catalysed reaction is L-threonyl-[protein] + ATP = O-phospho-L-threonyl-[protein] + ADP + H(+). Functionally, essential for viral replication. It may mediate the virus' progression through DNA replication. The polypeptide is Serine/threonine-protein kinase 1 (Ornithodoros (relapsing fever ticks)).